The following is a 309-amino-acid chain: Ribonuclease Z (309 aa).

Zn(2+)-binding residues include histidine 63, histidine 65, aspartate 67, histidine 68, histidine 145, aspartate 216, and histidine 274. Aspartate 67 serves as the catalytic Proton acceptor.

This sequence belongs to the RNase Z family. Homodimer. It depends on Zn(2+) as a cofactor.

It catalyses the reaction Endonucleolytic cleavage of RNA, removing extra 3' nucleotides from tRNA precursor, generating 3' termini of tRNAs. A 3'-hydroxy group is left at the tRNA terminus and a 5'-phosphoryl group is left at the trailer molecule.. In terms of biological role, zinc phosphodiesterase, which displays some tRNA 3'-processing endonuclease activity. Probably involved in tRNA maturation, by removing a 3'-trailer from precursor tRNA. The chain is Ribonuclease Z from Streptococcus agalactiae serotype V (strain ATCC BAA-611 / 2603 V/R).